A 1334-amino-acid chain; its full sequence is Nck-associated protein 5-like (1334 aa).

5 disordered regions span residues 1-28, 115-146, 210-234, 266-316, and 349-711; these read MSEA…MEPG, LPQI…APLP, TPWR…GPPQ, GEED…SPDT, and PLNG…MVPS. Positions 1–139 are mediates interaction with CDK5RAP2 and is required for homodimerization and microtubule bundle formation; the sequence is MSEAMDQPAG…PASPSLSSTE (139 aa). A coiled-coil region spans residues 28–106; sequence GTCQELLHRL…NQMLSALFQQ (79 aa). The span at 122–132 shows a compositional bias: pro residues; the sequence is PLQPPSEPPAS. The span at 358 to 372 shows a compositional bias: polar residues; sequence GQSSSPDQAPPQLSK. Phosphoserine; by CDK1 occurs at positions 440, 451, 470, and 477. A compositionally biased stretch (low complexity) spans 468–481; the sequence is SPSPGGPQLSPQLP. Positions 484–487 match the (S/T)X(I/L)P motif 1 motif; it reads SRIP. Residues S493, S496, and S498 each carry the phosphoserine modification. The span at 519–547 shows a compositional bias: polar residues; that stretch reads LPTSPSPCYTTPDSTQLRPPQSALSTTLS. Residues S571 and S577 each carry the phosphoserine; by CDK1 modification. Over residues 638–649 the composition is skewed to polar residues; sequence PGNSSKKPSQGS. The residue at position 659 (T659) is a Phosphothreonine. The interval 750 to 1146 is mediates interaction with beta-tubulin and is required for microtubule bundle formation; that stretch reads RVYSSHSMGA…SGTPSKNLPK (397 aa). The residue at position 767 (S767) is a Phosphoserine; by CDK1. The segment at 782 to 884 is disordered; the sequence is LAGALCPQVP…EGLAPHSAIE (103 aa). Residues 810-825 are compositionally biased toward low complexity; that stretch reads SPHSSPTKLPSKSPTK. A (S/T)X(I/L)P motif 2 motif is present at residues 816-819; it reads TKLP. Residues 926–929 carry the (S/T)X(I/L)P motif 3; required for interaction with MAPRE1 motif; sequence SKLP. 3 disordered regions span residues 931–953, 986–1015, and 1030–1183; these read LNRR…LRRE, KAYL…QGQL, and LNRV…VPGI. The segment covering 933-942 has biased composition (basic and acidic residues); it reads RRTEATKNKE. A coiled-coil region spans residues 956 to 994; sequence MEARKLEAESLNISKLMAKAEDLRRALEEEKAYLSSRAR. Basic and acidic residues predominate over residues 1033–1050; sequence VDGKELPSKSWREPKPEY. Over residues 1079-1090 the composition is skewed to low complexity; it reads GCGKPPGKPSSE. Positions 1110–1122 are enriched in polar residues; the sequence is SHFTACGSLTRTL. Residues 1152–1167 are compositionally biased toward pro residues; it reads LDPPPGVPPARPPPLT. S1194 bears the Phosphoserine mark. Positions 1197 to 1206 are enriched in low complexity; the sequence is AFPALLPAAP. Residues 1197-1334 form a disordered region; sequence AFPALLPAAP…DSLSSCGSQG (138 aa). Residues 1235 to 1247 show a composition bias toward polar residues; that stretch reads TFPNTRAAGSSSD. The segment covering 1313–1334 has biased composition (low complexity); the sequence is LETSESLSDSLYDSLSSCGSQG.

As to quaternary structure, homodimer. Interacts with CDK5RAP2. Interacts with MAPRE1. Interacts with beta-tubulin. In terms of processing, CDK1/Cyclin B-dependent phosphorylation mediates its dissociation from centrosomes during mitosis.

Its subcellular location is the cytoplasm. The protein localises to the cytoskeleton. It is found in the microtubule organizing center. It localises to the centrosome. Functionally, regulates microtubule organization and stabilization. Promotes microtubule growth and bundling formation and stabilizes microtubules by increasing intense acetylation of microtubules. Both tubulin-binding and homodimer formation are required for NCKAP5L-mediated microtubule bundle formation. This Homo sapiens (Human) protein is Nck-associated protein 5-like.